The primary structure comprises 219 residues: Cytidylate kinase (219 aa).

Residue 21-29 (GPAASGKGT) coordinates ATP.

This sequence belongs to the cytidylate kinase family. Type 1 subfamily.

The protein localises to the cytoplasm. The catalysed reaction is CMP + ATP = CDP + ADP. It catalyses the reaction dCMP + ATP = dCDP + ADP. This chain is Cytidylate kinase, found in Rickettsia akari (strain Hartford).